A 74-amino-acid chain; its full sequence is Translation initiation factor IF-1 (74 aa).

Positions 1–72 (MSKEDAIEVE…NKGRITYRLK (72 aa)) constitute an S1-like domain.

Belongs to the IF-1 family. As to quaternary structure, component of the 30S ribosomal translation pre-initiation complex which assembles on the 30S ribosome in the order IF-2 and IF-3, IF-1 and N-formylmethionyl-tRNA(fMet); mRNA recruitment can occur at any time during PIC assembly.

It localises to the cytoplasm. Its function is as follows. One of the essential components for the initiation of protein synthesis. Stabilizes the binding of IF-2 and IF-3 on the 30S subunit to which N-formylmethionyl-tRNA(fMet) subsequently binds. Helps modulate mRNA selection, yielding the 30S pre-initiation complex (PIC). Upon addition of the 50S ribosomal subunit IF-1, IF-2 and IF-3 are released leaving the mature 70S translation initiation complex. This chain is Translation initiation factor IF-1, found in Synechococcus sp. (strain JA-3-3Ab) (Cyanobacteria bacterium Yellowstone A-Prime).